A 303-amino-acid polypeptide reads, in one-letter code: Aspartate carbamoyltransferase catalytic subunit (303 aa).

Positions 51 and 52 each coordinate carbamoyl phosphate. Lys80 is an L-aspartate binding site. Residues Arg101, His129, and Gln132 each contribute to the carbamoyl phosphate site. 2 residues coordinate L-aspartate: Arg162 and Arg221. Carbamoyl phosphate is bound by residues Leu260 and Pro261.

Belongs to the aspartate/ornithine carbamoyltransferase superfamily. ATCase family. As to quaternary structure, heterooligomer of catalytic and regulatory chains.

It carries out the reaction carbamoyl phosphate + L-aspartate = N-carbamoyl-L-aspartate + phosphate + H(+). It functions in the pathway pyrimidine metabolism; UMP biosynthesis via de novo pathway; (S)-dihydroorotate from bicarbonate: step 2/3. In terms of biological role, catalyzes the condensation of carbamoyl phosphate and aspartate to form carbamoyl aspartate and inorganic phosphate, the committed step in the de novo pyrimidine nucleotide biosynthesis pathway. The polypeptide is Aspartate carbamoyltransferase catalytic subunit (Saccharolobus islandicus (strain M.16.27) (Sulfolobus islandicus)).